A 127-amino-acid chain; its full sequence is Large-conductance mechanosensitive channel (127 aa).

A run of 3 helical transmembrane segments spans residues 9–29 (EFAM…GVAF), 32–52 (IVTA…LGGI), and 75–95 (VIDF…INLL).

Belongs to the MscL family. In terms of assembly, homopentamer.

Its subcellular location is the cell inner membrane. Functionally, channel that opens in response to stretch forces in the membrane lipid bilayer. May participate in the regulation of osmotic pressure changes within the cell. The chain is Large-conductance mechanosensitive channel from Legionella pneumophila (strain Paris).